A 195-amino-acid polypeptide reads, in one-letter code: Imidazoleglycerol-phosphate dehydratase (195 aa).

It belongs to the imidazoleglycerol-phosphate dehydratase family.

It localises to the cytoplasm. It catalyses the reaction D-erythro-1-(imidazol-4-yl)glycerol 3-phosphate = 3-(imidazol-4-yl)-2-oxopropyl phosphate + H2O. It functions in the pathway amino-acid biosynthesis; L-histidine biosynthesis; L-histidine from 5-phospho-alpha-D-ribose 1-diphosphate: step 6/9. The protein is Imidazoleglycerol-phosphate dehydratase of Jannaschia sp. (strain CCS1).